We begin with the raw amino-acid sequence, 177 residues long: ATP synthase subunit delta (177 aa).

The protein belongs to the ATPase delta chain family. F-type ATPases have 2 components, F(1) - the catalytic core - and F(0) - the membrane proton channel. F(1) has five subunits: alpha(3), beta(3), gamma(1), delta(1), epsilon(1). F(0) has three main subunits: a(1), b(2) and c(10-14). The alpha and beta chains form an alternating ring which encloses part of the gamma chain. F(1) is attached to F(0) by a central stalk formed by the gamma and epsilon chains, while a peripheral stalk is formed by the delta and b chains.

The protein resides in the cell inner membrane. In terms of biological role, f(1)F(0) ATP synthase produces ATP from ADP in the presence of a proton or sodium gradient. F-type ATPases consist of two structural domains, F(1) containing the extramembraneous catalytic core and F(0) containing the membrane proton channel, linked together by a central stalk and a peripheral stalk. During catalysis, ATP synthesis in the catalytic domain of F(1) is coupled via a rotary mechanism of the central stalk subunits to proton translocation. Its function is as follows. This protein is part of the stalk that links CF(0) to CF(1). It either transmits conformational changes from CF(0) to CF(1) or is implicated in proton conduction. This Shewanella amazonensis (strain ATCC BAA-1098 / SB2B) protein is ATP synthase subunit delta.